A 431-amino-acid chain; its full sequence is Glutamyl-tRNA(Gln) amidotransferase subunit A (431 aa).

Residues Lys55 and Ser130 each act as charge relay system in the active site. Residue Ser154 is the Acyl-ester intermediate of the active site.

Belongs to the amidase family. GatA subfamily. In terms of assembly, heterotrimer of A, B and C subunits.

It catalyses the reaction L-glutamyl-tRNA(Gln) + L-glutamine + ATP + H2O = L-glutaminyl-tRNA(Gln) + L-glutamate + ADP + phosphate + H(+). Functionally, allows the formation of correctly charged Gln-tRNA(Gln) through the transamidation of misacylated Glu-tRNA(Gln) in organisms which lack glutaminyl-tRNA synthetase. The reaction takes place in the presence of glutamine and ATP through an activated gamma-phospho-Glu-tRNA(Gln). The polypeptide is Glutamyl-tRNA(Gln) amidotransferase subunit A (Methanococcus maripaludis (strain C6 / ATCC BAA-1332)).